A 282-amino-acid polypeptide reads, in one-letter code: Bifunctional protein FolD (282 aa).

Residues 165–167, serine 190, and threonine 231 contribute to the NADP(+) site; that span reads GRS.

This sequence belongs to the tetrahydrofolate dehydrogenase/cyclohydrolase family. In terms of assembly, homodimer.

It catalyses the reaction (6R)-5,10-methylene-5,6,7,8-tetrahydrofolate + NADP(+) = (6R)-5,10-methenyltetrahydrofolate + NADPH. The catalysed reaction is (6R)-5,10-methenyltetrahydrofolate + H2O = (6R)-10-formyltetrahydrofolate + H(+). The protein operates within one-carbon metabolism; tetrahydrofolate interconversion. Catalyzes the oxidation of 5,10-methylenetetrahydrofolate to 5,10-methenyltetrahydrofolate and then the hydrolysis of 5,10-methenyltetrahydrofolate to 10-formyltetrahydrofolate. This Clostridium beijerinckii (strain ATCC 51743 / NCIMB 8052) (Clostridium acetobutylicum) protein is Bifunctional protein FolD.